Consider the following 365-residue polypeptide: MEFSVEGTQFSPPVKRIFDTAGTHDFQKSLTMYRLQSHLERYLKLVQGQKIPKSSQNRAVVRFVCILERLDALMDETPPRTGSARRFGDLACRDWHDRMQGELDGLLETLLPEAARRSAAELRYYLGSAFGSRERLDYGTGHELAFLAVVVALDMLGLWTEDKFTGEDMLYVWARYYALVHRLILTYNLEPAGSHGVWGLDDHLHLAYILGASQWAQDRNVPMQPSDILDPKAVARYSETNLYCNSIAFLLRVKTGHFAQHSPMLHDIAQTVPTWSKVTTGLIKMYRVEVLNKFPVVQHFWFGTGFFPWVDMAHGMSLPNYEAPSETSEKPAAGTAHTTTTTMPPPRMTANCGYGPLGRLVTPRR.

The interval 321–349 is disordered; it reads YEAPSETSEKPAAGTAHTTTTTMPPPRMT. Residues 331–342 are compositionally biased toward low complexity; the sequence is PAAGTAHTTTTT.

Belongs to the PTPA-type PPIase family.

It is found in the cytoplasm. The protein resides in the nucleus. The catalysed reaction is [protein]-peptidylproline (omega=180) = [protein]-peptidylproline (omega=0). PPIases accelerate the folding of proteins. It catalyzes the cis-trans isomerization of proline imidic peptide bonds in oligopeptides. Acts as a regulatory subunit for PP2A-like phosphatases modulating their activity or substrate specificity, probably by inducing a conformational change in the catalytic subunit, a direct target of the PPIase. Can reactivate inactive phosphatase PP2A-phosphatase methylesterase complexes (PP2Ai) in presence of ATP and Mg(2+) by dissociating the inactive form from the complex. This is Serine/threonine-protein phosphatase 2A activator 1 (RRD1) from Eremothecium gossypii (strain ATCC 10895 / CBS 109.51 / FGSC 9923 / NRRL Y-1056) (Yeast).